A 659-amino-acid chain; its full sequence is Probable acyl-coenzyme A oxidase acox-1.5 (659 aa).

FAD is bound by residues Y148–T151, G156–T157, and G190. Substrate-binding positions include K284–Y287 and R294. FAD contacts are provided by residues R319 and Q339–R342. ATP is bound by residues H395 and Q403. Position 410 (G410) interacts with FAD. Y432–E433 is a binding site for substrate. E433 (proton acceptor) is an active-site residue. E435 lines the FAD pocket. K524–R527 is a binding site for ATP. The Microbody targeting signal motif lies at S657–L659.

Belongs to the acyl-CoA oxidase family. In terms of assembly, homodimer. FAD serves as cofactor.

The protein resides in the peroxisome. Its pathway is lipid metabolism; peroxisomal fatty acid beta-oxidation. Its activity is regulated as follows. Activated by ATP. ATP binding leads to a conformational change that promotes FAD cofactor binding and enzyme activity. ATP binding likely occurs during acox-1.5 folding and/or dimer formation. In terms of biological role, involved in the first step of peroxisomal beta-oxidation by catalyzing the desaturation of fatty acid-derived side chains. The sequence is that of Probable acyl-coenzyme A oxidase acox-1.5 from Caenorhabditis elegans.